The following is a 531-amino-acid chain: Histone-arginine methyltransferase CARMER (531 aa).

The SAM-dependent MTase PRMT-type domain occupies 141–450 (ASQYFQFYGY…QSYDVTIDLH (310 aa)). Residues glutamine 154, arginine 163, glycine 187, glutamate 209, glutamate 238, and threonine 266 each coordinate S-adenosyl-L-methionine. The residue at position 501 (arginine 501) is an Asymmetric dimethylarginine; by autocatalysis.

This sequence belongs to the class I-like SAM-binding methyltransferase superfamily. Protein arginine N-methyltransferase family. As to quaternary structure, homodimer. Post-translationally, the dimethylated protein is the major form.

It is found in the cytoplasm. Its subcellular location is the nucleus. The catalysed reaction is L-arginyl-[protein] + 2 S-adenosyl-L-methionine = N(omega),N(omega)-dimethyl-L-arginyl-[protein] + 2 S-adenosyl-L-homocysteine + 2 H(+). In terms of biological role, methylates (mono- and asymmetric dimethylation) the guanidino nitrogens of arginyl residues in proteins. May methylate histone H3 at 'Arg-17' and activate transcription via chromatin remodeling. This Drosophila persimilis (Fruit fly) protein is Histone-arginine methyltransferase CARMER (Art4).